The chain runs to 517 residues: FAD-dependent monooxygenase FUP4 (517 aa).

The first 19 residues, 1–19 (MRQSSTLTWTSVLLAPLAA), serve as a signal peptide directing secretion. In terms of domain architecture, FAD-binding PCMH-type spans 75 to 246 (QALRPACLVH…TRFDLDLYDQ (172 aa)). His112 bears the Pros-8alpha-FAD histidine mark. Asn163, Asn208, and Asn346 each carry an N-linked (GlcNAc...) asparagine glycan.

Belongs to the oxygen-dependent FAD-linked oxidoreductase family. It depends on FAD as a cofactor.

Its pathway is secondary metabolite biosynthesis; terpenoid biosynthesis. In terms of biological role, FAD-dependent monooxygenase; part of the gene cluster that mediates the biosynthesis of the mycotoxin fusaproliferin (FUP) that belongs to the class of bicyclic sesterterpenoids. FUP4 catalyzes the oxidation of the hydroxy group at the C-16 position of preterpestacin III to a keto group, leading to the formation of (-)-terpestacin. The product of FUP1, preterpestacin I, might also serve as a substrate of FUP4 to yield oxo-preterpestacin I. The FUP biosynthetic pathway starts with the enzyme encoded by FUP1 that combines a C-terminal prenyltransferase domain responsible for the synthesis of geranylgeranyl diphosphate with the N-terminal terpene cyclase domain, to yield preterpestacin I. Preterpestacin I is then decorated by oxygenation steps that are catalyzed by two cytochrome P450 monooxygenases. First, FUP2 introduces a hydroxyl group at the C-24 position resulting in the formation of preterpestacin IIa. The second P450 monooxygenase catalyzes the hydroxylation at C-16 and C-17 of preterpestacin IIa, producing preterpestacin III. Subsequently, the FAD-dependent oxidoreductase FUP4 catalyzes the oxidation of the hydroxy group at the C-16 position to a keto group, leading to the formation of (-)-terpestacin, which is the immediate precursor of FUP. The final step in the proposed biosynthetic pathway is the addition of an acetyl group at the C-24 position of terpestacin, which is catalyzed by the acetyltransferase FUP5. The polypeptide is FAD-dependent monooxygenase FUP4 (Fusarium proliferatum (strain ET1) (Orchid endophyte fungus)).